The primary structure comprises 430 residues: Ethylene-responsive transcription factor WRI1 (430 aa).

A compositionally biased stretch (low complexity) spans Met1–Ser26. A disordered region spans residues Met1–Tyr66. Residues Asn53–Ser63 are compositionally biased toward polar residues. The segment at residues Ile65–Pro131 is a DNA-binding region (AP2/ERF 1). Thr70 carries the phosphothreonine; by KIN10 modification. Ser166 carries the phosphoserine; by KIN10 modification. A DNA-binding region (AP2/ERF 2) is located at residues Lys167–Asp225. Over residues Val260–Lys274 the composition is skewed to basic and acidic residues. Disordered stretches follow at residues Val260–Glu297 and Ser398–Thr422.

Belongs to the AP2/ERF transcription factor family. AP2 subfamily. In terms of assembly, interacts with KIN10 and KIN11. In terms of processing, ubiquitinated. Post-translationally, the phosphorylation at Thr-70 and Ser-166 by KIN10 facilitates its degradation via the proteasomal pathway. Mostly expressed in siliques, especially in seeds. Also detected in roots and flowers, and, to a lower extent, in leaves stems and seedlings.

The protein localises to the nucleus. Its activity is regulated as follows. Down-regulated by KIN10 that controls its protein stability under a phosphorylation-dependent manner. Its function is as follows. May be involved in the regulation of gene expression by stress factors and by components of stress signal transduction pathways. Transcriptional activator involved in the activation of a subset of sugar-responsive genes and the control of carbon flow from sucrose import to oil accumulation in developing seeds. Binds to the GCC-box pathogenesis-related promoter element. Promotes sugar uptake and seed oil accumulation by glycolysis. Required for embryo development, seed germination and, indirectly, for seedling establishment. Negative regulator of the ABA-mediated germination inhibition. The chain is Ethylene-responsive transcription factor WRI1 (WRI1) from Arabidopsis thaliana (Mouse-ear cress).